The chain runs to 244 residues: Tetraspanin-2A (244 aa).

Residues 1–22 (MGIGYGASDEQLEKQIGCVKYT) lie on the Cytoplasmic side of the membrane. Residues 23 to 43 (LFCFNIVAWMISTALFALTVW) traverse the membrane as a helical segment. Topologically, residues 44–61 (LRAEPGFNDWLRILEAQS) are extracellular. The chain crosses the membrane as a helical span at residues 62–82 (FYIGVYVLIGISIVMMAVSFL). Over 83 to 91 (GCLSALMEN) the chain is Cytoplasmic. The chain crosses the membrane as a helical span at residues 92–112 (TLALFVFVGTQVFGFIAIVAG). The Extracellular portion of the chain corresponds to 113 to 206 (SAVLLQFSTI…TWFFEGKTGW (94 aa)). A helical transmembrane segment spans residues 207 to 227 (IVALAMTLGLLNVICAVMSFV). Residues 228–244 (LVQAVKKEEEQASNYRR) are Cytoplasmic-facing.

Belongs to the tetraspanin (TM4SF) family. Forms a complex with Ssk and mesh.

Its subcellular location is the apicolateral cell membrane. The protein localises to the cell junction. The protein resides in the septate junction. Functionally, required for assembly of smooth septate junctions (sSJs), together with Ssk and mesh. Important for barrier function of the midgut epithelium. In Drosophila melanogaster (Fruit fly), this protein is Tetraspanin-2A.